Reading from the N-terminus, the 336-residue chain is Fructose-1,6-bisphosphatase class 1 (336 aa).

Glu-90, Asp-112, Leu-114, and Asp-115 together coordinate Mg(2+). Substrate contacts are provided by residues 115 to 118 (DGSS), Asn-211, and Lys-277. Residue Glu-283 participates in Mg(2+) binding.

Belongs to the FBPase class 1 family. In terms of assembly, homotetramer. Requires Mg(2+) as cofactor.

The protein resides in the cytoplasm. It carries out the reaction beta-D-fructose 1,6-bisphosphate + H2O = beta-D-fructose 6-phosphate + phosphate. It participates in carbohydrate biosynthesis; gluconeogenesis. The polypeptide is Fructose-1,6-bisphosphatase class 1 (Pseudomonas fluorescens (strain SBW25)).